A 355-amino-acid chain; its full sequence is MSKSTSTPNPQNEKLKALQLTIDKLEKTYGKGTVMKLSDEVVMDVPVISTGSLGLDIALGIGGLPKGRIVEIYGPESSGKTTLSMHCIAEAQKAGGIAAFIDAEHAFDKTYAEKLGIDTTNLLISQPDNGEQALEIAEHLIRSGAIDIIVIDSVAALVPKAEIEGEMGDSKMGLQARLMSQALRKLTGAINKTGCCCIFINQLREKIGVMFGNPETTTGGNALKFYASVRLDIRRIGQIKESADNITGNRTKVKVVKNKMAPPFKVIEFDIMYGEGISKIGEIIDLGVELGIINKAGSWFSYEGTKLGQGRDAVRTVFLDNPEMQDEIELKIRQKVQLSGVPAAMEAKELEEEEA.

74–81 (GPESSGKT) provides a ligand contact to ATP.

This sequence belongs to the RecA family.

The protein resides in the cytoplasm. In terms of biological role, can catalyze the hydrolysis of ATP in the presence of single-stranded DNA, the ATP-dependent uptake of single-stranded DNA by duplex DNA, and the ATP-dependent hybridization of homologous single-stranded DNAs. It interacts with LexA causing its activation and leading to its autocatalytic cleavage. In Cytophaga hutchinsonii (strain ATCC 33406 / DSM 1761 / CIP 103989 / NBRC 15051 / NCIMB 9469 / D465), this protein is Protein RecA.